The primary structure comprises 435 residues: Islet cell autoantigen 1-like protein (435 aa).

The region spanning 44–247 is the AH domain; sequence ASDAELDAKL…TAQMMSQIQE (204 aa). Residues 391-435 are disordered; that stretch reads WASQEGSEHSDTLPVPSQHPKKLKYLGPLSNPDAIGHSDDELLNA. Basic and acidic residues predominate over residues 426–435; the sequence is GHSDDELLNA.

This is Islet cell autoantigen 1-like protein (Ica1l) from Rattus norvegicus (Rat).